Reading from the N-terminus, the 411-residue chain is Growth-regulating factor 7 (411 aa).

Residues 38–73 (PFTPTQWMELEHQALIYKHIVANAPVPAGLLLPIRR) enclose the QLQ domain. Positions 108–152 (DSEPGRCRRTDGKKWRCSRDAVVDQKYCERHINRGRHRSRKHVEG) constitute a WRC domain. 2 consecutive short sequence motifs (bipartite nuclear localization signal) follow at residues 113 to 123 (RCRRTDGKKWR) and 141 to 148 (RGRHRSRK). A disordered region spans residues 333 to 369 (FFTNTSSASDDKGKSRHPPSLNLLADGHTTSPQLQSP). Residues 360–369 (HTTSPQLQSP) are compositionally biased toward polar residues.

The protein belongs to the GRF family.

It is found in the nucleus. Functionally, transcription activator that plays a regulatory role in gibberellin-induced stem elongation. The polypeptide is Growth-regulating factor 7 (GRF7) (Oryza sativa subsp. japonica (Rice)).